A 78-amino-acid chain; its full sequence is Acyl carrier protein (78 aa).

One can recognise a Carrier domain in the interval 2–77 (SDIEQRVKQA…SAIDYVTKKL (76 aa)). Ser-37 carries the O-(pantetheine 4'-phosphoryl)serine modification.

Belongs to the acyl carrier protein (ACP) family. 4'-phosphopantetheine is transferred from CoA to a specific serine of apo-ACP by AcpS. This modification is essential for activity because fatty acids are bound in thioester linkage to the sulfhydryl of the prosthetic group.

It is found in the cytoplasm. Its pathway is lipid metabolism; fatty acid biosynthesis. Functionally, carrier of the growing fatty acid chain in fatty acid biosynthesis. In Acinetobacter baylyi (strain ATCC 33305 / BD413 / ADP1), this protein is Acyl carrier protein.